A 937-amino-acid chain; its full sequence is ABC transporter A family member 4 (937 aa).

A run of 7 helical transmembrane segments spans residues 34–54, 340–360, 394–414, 423–443, 455–475, 478–498, and 528–548; these read LIVI…LFDT, IASV…FPVI, FLAI…AIGL, SIQF…AFLV, VAAY…FQFM, GLSF…FSLY, and AMDE…IAAY. Residues 618 to 852 form the ABC transporter domain; sequence DKLKKVYPGR…YGGSYVLTMT (235 aa). ATP is bound at residue 653–660; sequence GPNGAGKT.

The protein belongs to the ABC transporter superfamily. ABCA family. CPR flippase (TC 3.A.1.211) subfamily.

The protein localises to the membrane. The polypeptide is ABC transporter A family member 4 (ABCA4) (Arabidopsis thaliana (Mouse-ear cress)).